Reading from the N-terminus, the 905-residue chain is Probable coatomer subunit gamma (905 aa).

HEAT repeat units lie at residues 265 to 302 (TQFR…NISD), 303 to 340 (DDLQ…TRPH), 374 to 412 (DESV…KFPR), 414 to 450 (QDSM…YIPE), and 525 to 563 (KFVQ…RDAF). Residue Ser-604 is modified to Phosphoserine.

The protein belongs to the COPG family. As to quaternary structure, oligomeric complex that consists of at least the alpha, beta, beta', gamma, delta, epsilon and zeta subunits.

It localises to the cytoplasm. It is found in the golgi apparatus membrane. Its subcellular location is the cytoplasmic vesicle. The protein resides in the COPI-coated vesicle membrane. Functionally, the coatomer is a cytosolic protein complex that binds to dilysine motifs and reversibly associates with Golgi non-clathrin-coated vesicles, which further mediate biosynthetic protein transport from the ER, via the Golgi up to the trans Golgi network. Coatomer complex is required for budding from Golgi membranes, and is essential for the retrograde Golgi-to-ER transport of dilysine-tagged proteins. The polypeptide is Probable coatomer subunit gamma (sec21) (Schizosaccharomyces pombe (strain 972 / ATCC 24843) (Fission yeast)).